The chain runs to 224 residues: Protein YiiM (224 aa).

Residues 26-163 (IQVDGELMLT…VSADAPLELV (138 aa)) form the MOSC domain.

As to quaternary structure, monomer.

This is Protein YiiM (yiiM) from Escherichia coli (strain K12).